The sequence spans 401 residues: Argininosuccinate synthase (401 aa).

Residue 9–17 participates in ATP binding; the sequence is AYSGGLDTS. Residue Y86 participates in L-citrulline binding. G116 contributes to the ATP binding site. Residues T118, N122, and D123 each coordinate L-aspartate. Residue N122 participates in L-citrulline binding. The L-citrulline site is built by R126, S174, S183, E259, and Y271.

It belongs to the argininosuccinate synthase family. Type 1 subfamily. Homotetramer.

It localises to the cytoplasm. The enzyme catalyses L-citrulline + L-aspartate + ATP = 2-(N(omega)-L-arginino)succinate + AMP + diphosphate + H(+). Its pathway is amino-acid biosynthesis; L-arginine biosynthesis; L-arginine from L-ornithine and carbamoyl phosphate: step 2/3. The chain is Argininosuccinate synthase from Bacillus anthracis (strain A0248).